The primary structure comprises 573 residues: Proline--tRNA ligase (573 aa).

Belongs to the class-II aminoacyl-tRNA synthetase family. ProS type 1 subfamily. Homodimer.

The protein localises to the cytoplasm. The enzyme catalyses tRNA(Pro) + L-proline + ATP = L-prolyl-tRNA(Pro) + AMP + diphosphate. Catalyzes the attachment of proline to tRNA(Pro) in a two-step reaction: proline is first activated by ATP to form Pro-AMP and then transferred to the acceptor end of tRNA(Pro). As ProRS can inadvertently accommodate and process non-cognate amino acids such as alanine and cysteine, to avoid such errors it has two additional distinct editing activities against alanine. One activity is designated as 'pretransfer' editing and involves the tRNA(Pro)-independent hydrolysis of activated Ala-AMP. The other activity is designated 'posttransfer' editing and involves deacylation of mischarged Ala-tRNA(Pro). The misacylated Cys-tRNA(Pro) is not edited by ProRS. This is Proline--tRNA ligase from Moorella thermoacetica (strain ATCC 39073 / JCM 9320).